The chain runs to 228 residues: Phosphoribosylformylglycinamidine synthase subunit PurQ (228 aa).

Residues 3–226 (FAVIVFPGSN…VKYWRETHVV (224 aa)) enclose the Glutamine amidotransferase type-1 domain. Residue cysteine 86 is the Nucleophile of the active site. Residues histidine 195 and glutamate 197 contribute to the active site.

As to quaternary structure, part of the FGAM synthase complex composed of 1 PurL, 1 PurQ and 2 PurS subunits.

The protein localises to the cytoplasm. It catalyses the reaction N(2)-formyl-N(1)-(5-phospho-beta-D-ribosyl)glycinamide + L-glutamine + ATP + H2O = 2-formamido-N(1)-(5-O-phospho-beta-D-ribosyl)acetamidine + L-glutamate + ADP + phosphate + H(+). The enzyme catalyses L-glutamine + H2O = L-glutamate + NH4(+). The protein operates within purine metabolism; IMP biosynthesis via de novo pathway; 5-amino-1-(5-phospho-D-ribosyl)imidazole from N(2)-formyl-N(1)-(5-phospho-D-ribosyl)glycinamide: step 1/2. Its function is as follows. Part of the phosphoribosylformylglycinamidine synthase complex involved in the purines biosynthetic pathway. Catalyzes the ATP-dependent conversion of formylglycinamide ribonucleotide (FGAR) and glutamine to yield formylglycinamidine ribonucleotide (FGAM) and glutamate. The FGAM synthase complex is composed of three subunits. PurQ produces an ammonia molecule by converting glutamine to glutamate. PurL transfers the ammonia molecule to FGAR to form FGAM in an ATP-dependent manner. PurS interacts with PurQ and PurL and is thought to assist in the transfer of the ammonia molecule from PurQ to PurL. This Geobacillus sp. (strain WCH70) protein is Phosphoribosylformylglycinamidine synthase subunit PurQ.